The chain runs to 329 residues: Chloroplast envelope quinone oxidoreductase homolog (329 aa).

Position 58 (Arg-58) interacts with substrate.

This sequence belongs to the zinc-containing alcohol dehydrogenase family. Quinone oxidoreductase subfamily. In terms of assembly, homodimer or homotetramer. Transition to monomer upon NADPH binding. Interacts with calmodulin. Interacts with HP30-1, HP30-2 and HP20.

It localises to the plastid. Its subcellular location is the chloroplast inner membrane. NADPH-dependent alpha,beta-unsaturated oxoene reductase reducing the double bond of medium-chain (C9) to long-chain (C18) reactive electrophile species deriving from poly-unsaturated fatty acid peroxides. The best substrates are 13-lipoxygenase-derived gamma-ketols, but is unable to reduce the double bond of short-chain alkenals and alkenones such as acrolein, crotonaldehyde, 3-buten-2-one, 4-hexen-3-one and trans-2-hexenal, or quinones such as duroquinone, decylubiquinone, coenzyme Q0, menadione, menaquinone and phylloquinone. Can use trans-2-nonenal, trans-3-decen-2-one, 4-hydroxynonenal, 12-oxo-10(E) dodecanoate (traumatin), 4-oxononenal, trans-1,3 diphenyl-2-propenone, trans-1,4-diphenyl-2-butene-1,4-dione, 9-oxo-12,13-epoxy-(10E)-octadecenoic acid (trans-EKODE-1b), 9-hydroxy-12-oxo-10(E)-octadecenoic acid, 9-Hydroxy-12-oxo-10(E),15(Z)-octadecadienoic acid and 9,13-dihydroxy-10-oxo-11-octadecenoic acid as substrates, but has no activity with 13(R,S)-hydroperoxy-9(Z),11(E)-octadecadienoic acid (13-HPOD), 9(S),12(S),13(S)-trihydroxy-10(E)-octadecenoic acid, 13-hydroxy-12-oxo-9(Z)-octadecenoic acid, 9-oxo-10(E),12(Z)-octadecadienoic acid (9-KODE), 13-oxo-9(Z),11(E)-octadecadienoic acid (13-KODE) and 12-oxo-10,15(Z)-phytodienoic acid (12-OPDA). The polypeptide is Chloroplast envelope quinone oxidoreductase homolog (Arabidopsis thaliana (Mouse-ear cress)).